The following is a 319-amino-acid chain: Lipoyl synthase (319 aa).

Residues Cys66, Cys71, Cys77, Cys92, Cys96, Cys99, and Ser305 each contribute to the [4Fe-4S] cluster site. Residues 78–294 (FNRGTATFMI…KKEALSIGFT (217 aa)) enclose the Radical SAM core domain.

The protein belongs to the radical SAM superfamily. Lipoyl synthase family. [4Fe-4S] cluster serves as cofactor.

It localises to the cytoplasm. It catalyses the reaction [[Fe-S] cluster scaffold protein carrying a second [4Fe-4S](2+) cluster] + N(6)-octanoyl-L-lysyl-[protein] + 2 oxidized [2Fe-2S]-[ferredoxin] + 2 S-adenosyl-L-methionine + 4 H(+) = [[Fe-S] cluster scaffold protein] + N(6)-[(R)-dihydrolipoyl]-L-lysyl-[protein] + 4 Fe(3+) + 2 hydrogen sulfide + 2 5'-deoxyadenosine + 2 L-methionine + 2 reduced [2Fe-2S]-[ferredoxin]. Its pathway is protein modification; protein lipoylation via endogenous pathway; protein N(6)-(lipoyl)lysine from octanoyl-[acyl-carrier-protein]: step 2/2. Its function is as follows. Catalyzes the radical-mediated insertion of two sulfur atoms into the C-6 and C-8 positions of the octanoyl moiety bound to the lipoyl domains of lipoate-dependent enzymes, thereby converting the octanoylated domains into lipoylated derivatives. The polypeptide is Lipoyl synthase (Buchnera aphidicola subsp. Schizaphis graminum (strain Sg)).